Reading from the N-terminus, the 405-residue chain is Phosphopentomutase (405 aa).

Aspartate 10, aspartate 303, histidine 308, aspartate 344, histidine 345, and histidine 356 together coordinate Mn(2+).

The protein belongs to the phosphopentomutase family. The cofactor is Mn(2+).

It is found in the cytoplasm. It catalyses the reaction 2-deoxy-alpha-D-ribose 1-phosphate = 2-deoxy-D-ribose 5-phosphate. The catalysed reaction is alpha-D-ribose 1-phosphate = D-ribose 5-phosphate. It participates in carbohydrate degradation; 2-deoxy-D-ribose 1-phosphate degradation; D-glyceraldehyde 3-phosphate and acetaldehyde from 2-deoxy-alpha-D-ribose 1-phosphate: step 1/2. Isomerase that catalyzes the conversion of deoxy-ribose 1-phosphate (dRib-1-P) and ribose 1-phosphate (Rib-1-P) to deoxy-ribose 5-phosphate (dRib-5-P) and ribose 5-phosphate (Rib-5-P), respectively. This Shewanella pealeana (strain ATCC 700345 / ANG-SQ1) protein is Phosphopentomutase.